The sequence spans 665 residues: Cysteine-rich receptor-like protein kinase 26 (665 aa).

The first 22 residues, 1–22 (MLSLLLPLISLLFQIQCFTVKS), serve as a signal peptide directing secretion. The Extracellular portion of the chain corresponds to 23 to 283 (QPVPLNQICS…GDKNRGVPKA (261 aa)). 2 Gnk2-homologous domains span residues 26 to 129 (PLNQ…NRTI) and 135 to 244 (ISPH…PWRF). Residues N33, N37, N67, N126, N146, and N266 are each glycosylated (N-linked (GlcNAc...) asparagine). Residues 251 to 275 (DDPSSVPATPSRPPKNETRSVTQGD) form a disordered region. Residues 284–304 (LIFASASVAIVVLFIVLLVVF) traverse the membrane as a helical segment. Topologically, residues 305–665 (LKLRRKENIR…YNSNTELYPR (361 aa)) are cytoplasmic. One can recognise a Protein kinase domain in the interval 344 to 624 (FSLENKLGEG…VLMLDGHTIA (281 aa)). ATP is bound by residues 350 to 358 (LGEGGFGAV) and K372. Y417 carries the phosphotyrosine modification. The Proton acceptor role is filled by D469. S473 bears the Phosphoserine mark. T510 is modified (phosphothreonine). Phosphotyrosine is present on Y518. Residues 641-665 (SDSSSSLGHNAKTSNYNSNTELYPR) form a disordered region. The span at 647-665 (LGHNAKTSNYNSNTELYPR) shows a compositional bias: polar residues.

The protein belongs to the protein kinase superfamily. Ser/Thr protein kinase family. CRK subfamily.

It localises to the membrane. The catalysed reaction is L-seryl-[protein] + ATP = O-phospho-L-seryl-[protein] + ADP + H(+). It catalyses the reaction L-threonyl-[protein] + ATP = O-phospho-L-threonyl-[protein] + ADP + H(+). The sequence is that of Cysteine-rich receptor-like protein kinase 26 (CRK26) from Arabidopsis thaliana (Mouse-ear cress).